The following is a 410-amino-acid chain: S-adenosylmethionine synthase (410 aa).

Residue H15 participates in ATP binding. Mg(2+) is bound at residue D17. A K(+)-binding site is contributed by E43. L-methionine-binding residues include E56 and Q100. Residues Q100–T110 are flexible loop. Residues D171–K173, K248–F249, D257, R263–K264, A280, and K284 each bind ATP. Residue D257 participates in L-methionine binding. K288 contacts L-methionine.

This sequence belongs to the AdoMet synthase family. As to quaternary structure, homotetramer; dimer of dimers. Mg(2+) serves as cofactor. Requires K(+) as cofactor.

The protein localises to the cytoplasm. The catalysed reaction is L-methionine + ATP + H2O = S-adenosyl-L-methionine + phosphate + diphosphate. The protein operates within amino-acid biosynthesis; S-adenosyl-L-methionine biosynthesis; S-adenosyl-L-methionine from L-methionine: step 1/1. In terms of biological role, catalyzes the formation of S-adenosylmethionine (AdoMet) from methionine and ATP. The overall synthetic reaction is composed of two sequential steps, AdoMet formation and the subsequent tripolyphosphate hydrolysis which occurs prior to release of AdoMet from the enzyme. The protein is S-adenosylmethionine synthase of Prochlorococcus marinus (strain MIT 9211).